Here is a 162-residue protein sequence, read N- to C-terminus: Urease accessory protein UreE 1 (162 aa).

Residues 143–162 (SGGHQHHHGHDHDHHHPDHE) are disordered. The segment covering 152 to 162 (HDHDHHHPDHE) has biased composition (basic and acidic residues).

Belongs to the UreE family.

It is found in the cytoplasm. Involved in urease metallocenter assembly. Binds nickel. Probably functions as a nickel donor during metallocenter assembly. The chain is Urease accessory protein UreE 1 from Brucella suis biovar 1 (strain 1330).